Reading from the N-terminus, the 308-residue chain is Protease HtpX homolog (308 aa).

2 consecutive transmembrane segments (helical) span residues 16 to 36 (LLSLLVGLGIAALASLIIYAV) and 39 to 59 (YLFGIYSIGIIFGVFVLVLMM). Residue His149 coordinates Zn(2+). Glu150 is a catalytic residue. His153 is a binding site for Zn(2+). 2 consecutive transmembrane segments (helical) span residues 161-181 (VIMAIGLIPTLIFYFAYTTLF) and 192-212 (IILALVLMVVSFLFNIMVLSV). A Zn(2+)-binding site is contributed by Glu217.

It belongs to the peptidase M48B family. The cofactor is Zn(2+).

It is found in the cell membrane. The polypeptide is Protease HtpX homolog (Thermoplasma volcanium (strain ATCC 51530 / DSM 4299 / JCM 9571 / NBRC 15438 / GSS1)).